We begin with the raw amino-acid sequence, 326 residues long: Phospho-N-acetylmuramoyl-pentapeptide-transferase (326 aa).

10 consecutive transmembrane segments (helical) span residues 2-22 (ILAT…FPYF), 51-71 (VPPM…LLWV), 73-93 (LTPE…LGFI), 113-133 (ILIQ…YSAE), 143-163 (GVII…IVGS), 175-195 (GLAA…AYIT), 199-219 (MNIT…LWFN), 225-245 (IFMG…TSVL), 250-270 (MLFA…IIQI), and 305-325 (VIVM…ITFL).

It belongs to the glycosyltransferase 4 family. MraY subfamily. Mg(2+) is required as a cofactor.

It localises to the cell membrane. It catalyses the reaction UDP-N-acetyl-alpha-D-muramoyl-L-alanyl-gamma-D-glutamyl-meso-2,6-diaminopimeloyl-D-alanyl-D-alanine + di-trans,octa-cis-undecaprenyl phosphate = di-trans,octa-cis-undecaprenyl diphospho-N-acetyl-alpha-D-muramoyl-L-alanyl-D-glutamyl-meso-2,6-diaminopimeloyl-D-alanyl-D-alanine + UMP. Its pathway is cell wall biogenesis; peptidoglycan biosynthesis. Catalyzes the initial step of the lipid cycle reactions in the biosynthesis of the cell wall peptidoglycan: transfers peptidoglycan precursor phospho-MurNAc-pentapeptide from UDP-MurNAc-pentapeptide onto the lipid carrier undecaprenyl phosphate, yielding undecaprenyl-pyrophosphoryl-MurNAc-pentapeptide, known as lipid I. The chain is Phospho-N-acetylmuramoyl-pentapeptide-transferase from Wolbachia sp. subsp. Drosophila simulans (strain wRi).